We begin with the raw amino-acid sequence, 846 residues long: Disks large-associated protein 5 (846 aa).

Serine 67 is modified (phosphoserine; by CDK1). The stretch at 90–120 (RKQMLQKYKEEKQLQKLKEQREKAKRGIFKV) forms a coiled coil. Positions 153 to 284 (TRSKAKDQME…TNATSGMNPD (132 aa)) are disordered. 2 stretches are compositionally biased toward basic and acidic residues: residues 156–174 (KAKDQMEQTKIDNESDVRA) and 182–194 (TSEKKVSDKEKKV). Serine 202 carries the post-translational modification Phosphoserine. The span at 203–225 (LRMTRSATQAAKQVPRTVSSTTA) shows a compositional bias: polar residues. Residues 250-266 (KNVETKPDKGISCKVDS) are compositionally biased toward basic and acidic residues. A compositionally biased stretch (polar residues) spans 269 to 281 (NTLNSQTNATSGM). Threonine 326 is subject to Phosphothreonine. Threonine 329 bears the Phosphothreonine; by CDK1 mark. Threonine 338 is modified (phosphothreonine). Lysine 347 participates in a covalent cross-link: Glycyl lysine isopeptide (Lys-Gly) (interchain with G-Cter in SUMO2). Residues threonine 401 and threonine 402 each carry the phosphothreonine; by CDK1 modification. Serine 618 is modified (phosphoserine; by CDK1). Serine 627 bears the Phosphoserine; by AURKA mark. Polar residues predominate over residues 628–671 (VSSEGPSQRLGTPKSVNKAVSQSRNEMGIPQQTTSPENAGPQNT). The tract at residues 628–674 (VSSEGPSQRLGTPKSVNKAVSQSRNEMGIPQQTTSPENAGPQNTKSE) is disordered. A phosphoserine mark is found at serine 629 and serine 634. Threonine 639 bears the Phosphothreonine; by CDK1 mark. Position 642 is a phosphoserine; by CDK1 (serine 642). Position 662 is a phosphoserine (serine 662). Phosphoserine; by AURKA occurs at positions 725 and 757. Threonine 759 carries the post-translational modification Phosphothreonine; by CDK1. Residues serine 774 and serine 777 each carry the phosphoserine modification. Threonine 784 is subject to Phosphothreonine. Phosphoserine is present on residues serine 806 and serine 812. A Phosphoserine; by AURKA modification is found at serine 830. A Phosphoserine; by CDK1 modification is found at serine 839.

The protein belongs to the SAPAP family. In terms of assembly, interacts with CDK1. Interacts with the C-terminal proline-rich region of FBXO7. Recruited by FBXO7 to a SCF (SKP1-CUL1-F-box) protein complex in a CDK1/Cyclin B-phosphorylation dependent manner. Interacts with CDH1. Post-translationally, ubiquitinated, leading to its degradation. In terms of processing, decreased phosphorylation levels are associated with the differentiation of intestinal epithelial cells. As to expression, abundantly expressed in fetal liver. Expressed at lower levels in bone marrow, testis, colon, and placenta.

The protein resides in the nucleus. The protein localises to the cytoplasm. It localises to the cytoskeleton. Its subcellular location is the spindle. Functionally, potential cell cycle regulator that may play a role in carcinogenesis of cancer cells. Mitotic phosphoprotein regulated by the ubiquitin-proteasome pathway. Key regulator of adherens junction integrity and differentiation that may be involved in CDH1-mediated adhesion and signaling in epithelial cells. This Homo sapiens (Human) protein is Disks large-associated protein 5 (DLGAP5).